The chain runs to 314 residues: Aspartate carbamoyltransferase catalytic subunit (314 aa).

Residues Arg-64 and Thr-65 each contribute to the carbamoyl phosphate site. Residue Lys-92 participates in L-aspartate binding. 3 residues coordinate carbamoyl phosphate: Arg-114, His-142, and Gln-145. Arg-175 and Arg-230 together coordinate L-aspartate. Carbamoyl phosphate is bound by residues Gly-271 and Pro-272.

It belongs to the aspartate/ornithine carbamoyltransferase superfamily. ATCase family. As to quaternary structure, heterododecamer (2C3:3R2) of six catalytic PyrB chains organized as two trimers (C3), and six regulatory PyrI chains organized as three dimers (R2).

It carries out the reaction carbamoyl phosphate + L-aspartate = N-carbamoyl-L-aspartate + phosphate + H(+). Its pathway is pyrimidine metabolism; UMP biosynthesis via de novo pathway; (S)-dihydroorotate from bicarbonate: step 2/3. Catalyzes the condensation of carbamoyl phosphate and aspartate to form carbamoyl aspartate and inorganic phosphate, the committed step in the de novo pyrimidine nucleotide biosynthesis pathway. In Deinococcus radiodurans (strain ATCC 13939 / DSM 20539 / JCM 16871 / CCUG 27074 / LMG 4051 / NBRC 15346 / NCIMB 9279 / VKM B-1422 / R1), this protein is Aspartate carbamoyltransferase catalytic subunit.